Consider the following 486-residue polypeptide: Glutamate--tRNA ligase 2 (486 aa).

Positions 12–22 (PSPTGELHIGN) match the 'HIGH' region motif. The short motif at 252–256 (KLSKR) is the 'KMSKS' region element. Lys255 contacts ATP.

Belongs to the class-I aminoacyl-tRNA synthetase family. Glutamate--tRNA ligase type 1 subfamily. In terms of assembly, monomer.

Its subcellular location is the cytoplasm. The catalysed reaction is tRNA(Glu) + L-glutamate + ATP = L-glutamyl-tRNA(Glu) + AMP + diphosphate. Its function is as follows. Catalyzes the attachment of glutamate to tRNA(Glu) in a two-step reaction: glutamate is first activated by ATP to form Glu-AMP and then transferred to the acceptor end of tRNA(Glu). In Syntrophus aciditrophicus (strain SB), this protein is Glutamate--tRNA ligase 2.